The chain runs to 850 residues: Ras GTPase-activating protein 2 (850 aa).

Residues 1 to 24 are compositionally biased toward low complexity; that stretch reads MAAAAPAAAAASSEAPAASATAEP. Residues 1–32 are disordered; the sequence is MAAAAPAAAAASSEAPAASATAEPEAGDQDSR. The residue at position 2 (alanine 2) is an N-acetylalanine. C2 domains lie at 20–138 and 149–289; these read ATAE…ETWF and VQGK…QAWY. One can recognise a Ras-GAP domain in the interval 372 to 589; sequence DKLVPFATAV…IAVKKFLDEI (218 aa). A Phosphoserine modification is found at serine 555. Residues 604 to 706 enclose the PH domain; it reads VHLKEGEMYK…WIDVLCRVSR (103 aa). The Btk-type zinc finger occupies 708–744; sequence NQNRLSFYHPSVYLNGNWLCCQETGENTLGCKPCTAG. Positions 716, 727, 728, and 738 each coordinate Zn(2+). The tract at residues 825–850 is disordered; that stretch reads HEKYRKKRSSSAKYGSKENPIVGKAS.

The protein localises to the cytoplasm. Its subcellular location is the perinuclear region. Functionally, inhibitory regulator of the Ras-cyclic AMP pathway. Binds inositol tetrakisphosphate (IP4). This is Ras GTPase-activating protein 2 (RASA2) from Homo sapiens (Human).